An 883-amino-acid chain; its full sequence is Aldehyde-alcohol dehydrogenase (883 aa).

Residues 13-456 (KLVAEKHVDE…DNVSAINLLN (444 aa)) are aldehyde dehydrogenase. NAD(+) contacts are provided by residues 121 to 126 (ITPTTN), Gly-206, and Gly-224. Cys-257 functions as the Nucleophile in the catalytic mechanism. Residues Glu-355, Leu-435, and 438-443 (GSYGRN) each bind NAD(+). The interval 457 to 464 (IKKVGRRR) is linker. NAD(+) is bound by residues Asp-500, Asp-534, 561–565 (GSPMD), 612–613 (TT), Val-625, Lys-634, and Leu-653. 4 residues coordinate Fe cation: Asp-668, His-672, His-736, and His-750.

In the N-terminal section; belongs to the aldehyde dehydrogenase family. It in the C-terminal section; belongs to the iron-containing alcohol dehydrogenase family. The cofactor is Fe(2+).

The enzyme catalyses ethanol + NAD(+) = acetaldehyde + NADH + H(+). It carries out the reaction an aldehyde + NAD(+) + H2O = a carboxylate + NADH + 2 H(+). In terms of biological role, has alcohol dehydrogenase activity. Has aldehyde dehydrogenase activity. May play a role in enhancing virulence in mice. May be considered a potential virulence factor. The chain is Aldehyde-alcohol dehydrogenase from Streptococcus pneumoniae serotype 4 (strain ATCC BAA-334 / TIGR4).